The sequence spans 324 residues: MPRTPSYTNTKTTQVNNVTEITVFILLGFTDDVDMNIFLFILFLAIYVVTLIGNLGLVVLVIEDSRLHNPMYYFLTVLSSLDACFSSVLTPKMLVNFLSKNKSISFAGCATQMLLFVTFGTTECFLLAAMAYDRYLAIYSPLLYAVRMSPRVYVPLIIASYTGGILHATIHTVATFSLSFCGSNEIRHVFCDIPPLLALSCSDTHLNQLLLFYCAGSIELITILIVLVSYGFVLLAILKINSAEGRRKIFSTCGAHLTGVSIFHGTILFMYVRPSSNYTLEQDMVVSTFYTIVIPMLNPIIYSLRNKDVKEAMRKLLKRKLVHE.

The Extracellular segment spans residues 1–37; sequence MPRTPSYTNTKTTQVNNVTEITVFILLGFTDDVDMNI. N-linked (GlcNAc...) asparagine glycosylation is present at Asn-17. A helical membrane pass occupies residues 38–58; sequence FLFILFLAIYVVTLIGNLGLV. At 59–66 the chain is on the cytoplasmic side; the sequence is VLVIEDSR. The chain crosses the membrane as a helical span at residues 67-87; sequence LHNPMYYFLTVLSSLDACFSS. Over 88–111 the chain is Extracellular; that stretch reads VLTPKMLVNFLSKNKSISFAGCAT. An N-linked (GlcNAc...) asparagine glycan is attached at Asn-101. Cysteines 109 and 201 form a disulfide. The helical transmembrane segment at 112–132 threads the bilayer; that stretch reads QMLLFVTFGTTECFLLAAMAY. Residues 133 to 145 are Cytoplasmic-facing; the sequence is DRYLAIYSPLLYA. Residues 146–166 traverse the membrane as a helical segment; it reads VRMSPRVYVPLIIASYTGGIL. Topologically, residues 167 to 208 are extracellular; sequence HATIHTVATFSLSFCGSNEIRHVFCDIPPLLALSCSDTHLNQ. A helical membrane pass occupies residues 209–229; sequence LLLFYCAGSIELITILIVLVS. Residues 230–249 are Cytoplasmic-facing; it reads YGFVLLAILKINSAEGRRKI. A helical transmembrane segment spans residues 250–270; it reads FSTCGAHLTGVSIFHGTILFM. The Extracellular portion of the chain corresponds to 271 to 283; the sequence is YVRPSSNYTLEQD. Asn-277 carries an N-linked (GlcNAc...) asparagine glycan. Residues 284-304 traverse the membrane as a helical segment; it reads MVVSTFYTIVIPMLNPIIYSL. At 305 to 324 the chain is on the cytoplasmic side; sequence RNKDVKEAMRKLLKRKLVHE.

Belongs to the G-protein coupled receptor 1 family.

The protein localises to the cell membrane. Potential odorant receptor. This chain is Olfactory receptor 5T17, found in Mus musculus (Mouse).